The chain runs to 470 residues: Putative multidrug resistance protein MdtD (470 aa).

Residues 1 to 11 (MTEFPDNTRWQ) are Periplasmic-facing. A helical membrane pass occupies residues 12–32 (LWIVAFGFFMQSLDTTIVNTA). Residues 33–48 (LPSMAKSLGESPLHMH) are Cytoplasmic-facing. The helical transmembrane segment at 49–69 (MVVVSYVLTVAVMLPASGWLA) threads the bilayer. The Periplasmic segment spans residues 70 to 76 (DKIGVRN). Residues 77–97 (IFFAAIVLFTLGSLFCALSGT) traverse the membrane as a helical segment. The Cytoplasmic segment spans residues 98 to 101 (LNQL). Residues 102-124 (VLARVLQGVGGAMMVPVGRLTVM) traverse the membrane as a helical segment. Residues 125 to 137 (KIVPRAQYMAAMT) are Periplasmic-facing. A helical transmembrane segment spans residues 138 to 158 (FVALPGQIGPLLGPALGGVLV). Residues 159-164 (EYASWH) are Cytoplasmic-facing. A helical membrane pass occupies residues 165 to 185 (WIFLINIPVGIVGAMATFMLM). The Periplasmic portion of the chain corresponds to 186 to 196 (PNYTIETRRFD). The chain crosses the membrane as a helical span at residues 197–217 (LPGFLLLAIGMAVLTLALDGS). Over 218–224 (KSMGISP) the chain is Cytoplasmic. Residues 225-245 (WTLAGLAAGGAAAILLYLFHA) traverse the membrane as a helical segment. The Periplasmic segment spans residues 246 to 262 (KKNSGALFSLRLFRTPT). A helical transmembrane segment spans residues 263-283 (FSLGLLGSFAGRIGSGMLPFM). Residues 284–285 (TP) lie on the Cytoplasmic side of the membrane. Residues 286 to 306 (VFLQIGLGFSPFHAGLMMIPM) traverse the membrane as a helical segment. Residues 307-341 (VLGSMGMKRIVVQIVNRFGYRRVLVATTLGLALVS) are Periplasmic-facing. The chain crosses the membrane as a helical span at residues 342–362 (LLFMSVALLGWYYLLPLVLLL). The Cytoplasmic segment spans residues 363-395 (QGMVNSARFSSMNTLTLKDLPDTLASSGNSLLS). Residues 396–416 (MIMQLSMSIGVTIAGMLLGMF) form a helical membrane-spanning segment. The Periplasmic segment spans residues 417 to 430 (GQQHIGIDSSATHH). The helical transmembrane segment at 431–451 (VFMYTWLCMAVIIALPAIIFA) threads the bilayer. Residues 452 to 470 (RVPNDTQQNMVISRRKRSL) lie on the Cytoplasmic side of the membrane.

The protein belongs to the major facilitator superfamily. TCR/Tet family.

The protein resides in the cell inner membrane. This chain is Putative multidrug resistance protein MdtD, found in Salmonella typhi.